The sequence spans 101 residues: Protein Tat (101 aa).

The interval 1–20 (MEVVDPNLDPWKHPGSQPET) is disordered. The interaction with human CREBBP stretch occupies residues 1–24 (MEVVDPNLDPWKHPGSQPETPCNK). The tract at residues 1–48 (MEVVDPNLDPWKHPGSQPETPCNKCYCKKCCFHCQLCFTRKGLGISYG) is transactivation. Residues C22, C25, and C27 each contribute to the Zn(2+) site. Residues 22 to 37 (CNKCYCKKCCFHCQLC) are cysteine-rich. K28 is modified (N6-acetyllysine; by host PCAF). Positions 30, 33, 34, and 37 each coordinate Zn(2+). Residues 38 to 48 (FTRKGLGISYG) are core. A disordered region spans residues 47–101 (YGRKKRRQRRRTPQSGEVHQDPVSKQPLSQTRGDPKGPEESKKKVESKTKTDPSD). Basic residues predominate over residues 48 to 58 (GRKKRRQRRRT). Positions 49 to 57 (RKKRRQRRR) match the Nuclear localization signal, RNA-binding (TAR), and protein transduction motif. Positions 49–86 (RKKRRQRRRTPQSGEVHQDPVSKQPLSQTRGDPKGPEE) are interaction with the host capping enzyme RNGTT. 2 positions are modified to N6-acetyllysine; by host EP300 and GCN5L2: K50 and K51. Residues R52 and R53 each carry the asymmetric dimethylarginine; by host PRMT6 modification. A Glycyl lysine isopeptide (Lys-Gly) (interchain with G-Cter in ubiquitin) cross-link involves residue K71. The Cell attachment site motif lies at 78–80 (RGD). The segment covering 79-101 (GDPKGPEESKKKVESKTKTDPSD) has biased composition (basic and acidic residues).

It belongs to the lentiviruses Tat family. As to quaternary structure, interacts with host CCNT1. Associates with the P-TEFb complex composed at least of Tat, P-TEFb (CDK9 and CCNT1), TAR RNA, RNA Pol II. Recruits the HATs CREBBP, TAF1/TFIID, EP300, PCAF and GCN5L2. Interacts with host KAT5/Tip60; this interaction targets the latter to degradation. Interacts with the host deacetylase SIRT1. Interacts with host capping enzyme RNGTT; this interaction stimulates RNGTT. Binds to host KDR, and to the host integrins ITGAV/ITGB3 and ITGA5/ITGB1. Interacts with host KPNB1/importin beta-1 without previous binding to KPNA1/importin alpha-1. Interacts with EIF2AK2. Interacts with host nucleosome assembly protein NAP1L1; this interaction may be required for the transport of Tat within the nucleus, since the two proteins interact at the nuclear rim. Interacts with host C1QBP/SF2P32; this interaction involves lysine-acetylated Tat. Interacts with the host chemokine receptors CCR2, CCR3 and CXCR4. Interacts with host DPP4/CD26; this interaction may trigger an anti-proliferative effect. Interacts with host LDLR. Interacts with the host extracellular matrix metalloproteinase MMP1. Interacts with host PRMT6; this interaction mediates Tat's methylation. Interacts with, and is ubiquitinated by MDM2/Hdm2. Interacts with host PSMC3 and HTATIP2. Interacts with STAB1; this interaction may overcome SATB1-mediated repression of IL2 and IL2RA (interleukin) in T cells by binding to the same domain than HDAC1. Interacts (when acetylated) with human CDK13, thereby increasing HIV-1 mRNA splicing and promoting the production of the doubly spliced HIV-1 protein Nef. Interacts with host TBP; this interaction modulates the activity of transcriptional pre-initiation complex. Interacts with host RELA. Interacts with host PLSCR1; this interaction negatively regulates Tat transactivation activity by altering its subcellular distribution. Post-translationally, asymmetrical arginine methylation by host PRMT6 seems to diminish the transactivation capacity of Tat and affects the interaction with host CCNT1. Acetylation by EP300, CREBBP, GCN5L2/GCN5 and PCAF regulates the transactivation activity of Tat. EP300-mediated acetylation of Lys-50 promotes dissociation of Tat from the TAR RNA through the competitive binding to PCAF's bromodomain. In addition, the non-acetylated Tat's N-terminus can also interact with PCAF. PCAF-mediated acetylation of Lys-28 enhances Tat's binding to CCNT1. Lys-50 is deacetylated by SIRT1. In terms of processing, polyubiquitination by host MDM2 does not target Tat to degradation, but activates its transactivation function and fosters interaction with CCNT1 and TAR RNA. Post-translationally, phosphorylated by EIF2AK2 on serine and threonine residues adjacent to the basic region important for TAR RNA binding and function. Phosphorylation of Tat by EIF2AK2 is dependent on the prior activation of EIF2AK2 by dsRNA.

It localises to the host nucleus. It is found in the host nucleolus. Its subcellular location is the host cytoplasm. The protein resides in the secreted. Functionally, transcriptional activator that increases RNA Pol II processivity, thereby increasing the level of full-length viral transcripts. Recognizes a hairpin structure at the 5'-LTR of the nascent viral mRNAs referred to as the transactivation responsive RNA element (TAR) and recruits the cyclin T1-CDK9 complex (P-TEFb complex) that will in turn hyperphosphorylate the RNA polymerase II to allow efficient elongation. The CDK9 component of P-TEFb and other Tat-activated kinases hyperphosphorylate the C-terminus of RNA Pol II that becomes stabilized and much more processive. Other factors such as HTATSF1/Tat-SF1, SUPT5H/SPT5, and HTATIP2 are also important for Tat's function. Besides its effect on RNA Pol II processivity, Tat induces chromatin remodeling of proviral genes by recruiting the histone acetyltransferases (HATs) CREBBP, EP300 and PCAF to the chromatin. This also contributes to the increase in proviral transcription rate, especially when the provirus integrates in transcriptionally silent region of the host genome. To ensure maximal activation of the LTR, Tat mediates nuclear translocation of NF-kappa-B by interacting with host RELA. Through its interaction with host TBP, Tat may also modulate transcription initiation. Tat can reactivate a latently infected cell by penetrating in it and transactivating its LTR promoter. In the cytoplasm, Tat is thought to act as a translational activator of HIV-1 mRNAs. Its function is as follows. Extracellular circulating Tat can be endocytosed by surrounding uninfected cells via the binding to several surface receptors such as CD26, CXCR4, heparan sulfate proteoglycans (HSPG) or LDLR. Neurons are rarely infected, but they internalize Tat via their LDLR. Through its interaction with nuclear HATs, Tat is potentially able to control the acetylation-dependent cellular gene expression. Modulates the expression of many cellular genes involved in cell survival, proliferation or in coding for cytokines or cytokine receptors. Tat plays a role in T-cell and neurons apoptosis. Tat induced neurotoxicity and apoptosis probably contribute to neuroAIDS. Circulating Tat also acts as a chemokine-like and/or growth factor-like molecule that binds to specific receptors on the surface of the cells, affecting many cellular pathways. In the vascular system, Tat binds to ITGAV/ITGB3 and ITGA5/ITGB1 integrins dimers at the surface of endothelial cells and competes with bFGF for heparin-binding sites, leading to an excess of soluble bFGF. The sequence is that of Protein Tat from Homo sapiens (Human).